Reading from the N-terminus, the 258-residue chain is Calcium release-activated calcium channel protein 1 (258 aa).

Topologically, residues 1 to 63 (MYPECGVETK…SRAKLKASSR (63 aa)) are cytoplasmic. The helical transmembrane segment at 64 to 81 (TSALLSGFAMVAMVEVQL) threads the bilayer. Topologically, residues 82-91 (EPNHAYPPGL) are extracellular. A helical membrane pass occupies residues 92 to 112 (LIAFSACTTVLVAVHLFALMV). Topologically, residues 113-145 (STCILPNIEAVSNVHNLNSVKESPHERMHHHIE) are cytoplasmic. The helical transmembrane segment at 146 to 166 (LAWAFSTVIGTLLFLAEVVLL) threads the bilayer. Topologically, residues 167 to 192 (CWVKFLPVNSPKISSNETSAVSSGQA) are extracellular. Asn-182 carries an N-linked (GlcNAc...) asparagine glycan. Residues 193–213 (AAITSTAIMVPFGLVFIVFAV) traverse the membrane as a helical segment. Residues 214-258 (HFYRSLVSHKTDRQFQELNELAELAQLQDQLDHRGDPVQSPVHYA) lie on the Cytoplasmic side of the membrane.

Belongs to the Orai family.

It is found in the cell membrane. Its function is as follows. Ca(2+) release-activated Ca(2+) (CRAC) channel subunit which mediates Ca(2+) influx following depletion of intracellular Ca(2+) stores. In Xenopus laevis (African clawed frog), this protein is Calcium release-activated calcium channel protein 1 (orai1).